Here is a 527-residue protein sequence, read N- to C-terminus: MNGDLNSWDKFCNYLWFDKKLNIWLDISKINFTSKEINNLEDKFVDVFSSMKELENGAISNIDENRQVGHYWLRNPSISPSSKIAEEIRADINAISEFGKQILNGDIKNKNNKQYTDVLWIGIGGSGLGPLLITESLQKCSRGLNFSYIDNVDPFLISEKLEELSEKLSTTLFVVVSKSGGTPEPRIAMEIIKSHCEKNSLEWNSNAIAITMKDSKLFKKATSEYWLKIFNLQDWVGGRTSITSSVGLLPLALINENISEFIKGASLMDEATRISDFKNNPAALLSSAWYLTGDGTGKRDMVVLPYRDRLQVFSKYLQQLVMESLGKKFNRNGEVVNQGISVFGNKGSTDQHAYVQQLRDGIDNFFCIFIELLDTPSTNIFDDKENPKEYLSGFLQGTRSALSSENRQSITITLEKLNCFSLGALIALFERAVSFYAELVNINAYDQPGVEAGKKAAANIIEYQQKVSNLLDAGGEYSINDITSLFDNSVSESIFFILREMCFGNDNYLVKGDWSNPNSLVIQKLNS.

Catalysis depends on E323, which acts as the Proton donor. Residues H352 and K454 contribute to the active site.

Belongs to the GPI family.

It localises to the cytoplasm. The catalysed reaction is alpha-D-glucose 6-phosphate = beta-D-fructose 6-phosphate. It participates in carbohydrate biosynthesis; gluconeogenesis. Its pathway is carbohydrate degradation; glycolysis; D-glyceraldehyde 3-phosphate and glycerone phosphate from D-glucose: step 2/4. Catalyzes the reversible isomerization of glucose-6-phosphate to fructose-6-phosphate. The chain is Glucose-6-phosphate isomerase from Prochlorococcus marinus (strain MIT 9301).